The chain runs to 200 residues: Large ribosomal subunit protein uL4 (200 aa).

A disordered region spans residues 38-80 (GRQGSKQQKTRSDVSGGGKRPWRQKGTGRARAGTTRGPIWRGG).

Belongs to the universal ribosomal protein uL4 family. In terms of assembly, part of the 50S ribosomal subunit.

Its function is as follows. One of the primary rRNA binding proteins, this protein initially binds near the 5'-end of the 23S rRNA. It is important during the early stages of 50S assembly. It makes multiple contacts with different domains of the 23S rRNA in the assembled 50S subunit and ribosome. Functionally, forms part of the polypeptide exit tunnel. This chain is Large ribosomal subunit protein uL4, found in Stutzerimonas stutzeri (strain A1501) (Pseudomonas stutzeri).